The sequence spans 161 residues: CASP-like protein 1C2 (161 aa).

The Cytoplasmic segment spans residues 1–7 (MAKNTDR). The helical transmembrane segment at 8–28 (ICFLVLRLLAFGATLSAAIVM) threads the bilayer. The Extracellular segment spans residues 29-53 (ATSHERTTYLSLSIEAKYSHTPAFK). A helical membrane pass occupies residues 54–74 (YFVIANAIGSAYSLLLLFLPS). The Cytoplasmic portion of the chain corresponds to 75-86 (HGSLWPLVIASD). Residues 87–107 (VVITMFLTSSISAALSIAYVG) traverse the membrane as a helical segment. Residues 108–131 (KKGNSYAGWLPICDQVPNYCNHVT) are Extracellular-facing. Residues 132–152 (GALAAGFIGVVLYMVLLQYSI) traverse the membrane as a helical segment. Over 153-161 (YTKCCKSSS) the chain is Cytoplasmic.

The protein belongs to the Casparian strip membrane proteins (CASP) family. As to quaternary structure, homodimer and heterodimers.

It is found in the cell membrane. This is CASP-like protein 1C2 from Vitis vinifera (Grape).